Consider the following 427-residue polypeptide: Septin-8-A (427 aa).

The region spanning 39–305 is the Septin-type G domain; the sequence is QGFCFNILCV…ELYRRCKLEE (267 aa). The interval 49–56 is G1 motif; the sequence is GETGIGKS. GTP-binding positions include 49 to 56, G104, 185 to 193, G239, and R254; these read GETGIGKS and KADTISKSE. A G3 motif region spans residues 101-104; that stretch reads DTVG. The G4 motif stretch occupies residues 184–187; it reads AKAD. Positions 320–409 form a coiled coil; it reads LQETYEAKRK…KAAMEALQSQ (90 aa). The span at 376–389 shows a compositional bias: basic and acidic residues; sequence QEESKKVEDKRRDL. A disordered region spans residues 376-427; that stretch reads QEESKKVEDKRRDLEEEMNSFNRRKAAMEALQSQSFQATSQQPLKKDKDRKN. Residues 406 to 418 are compositionally biased toward polar residues; the sequence is LQSQSFQATSQQP.

Belongs to the TRAFAC class TrmE-Era-EngA-EngB-Septin-like GTPase superfamily. Septin GTPase family.

In Xenopus laevis (African clawed frog), this protein is Septin-8-A (sept8-a).